A 1780-amino-acid chain; its full sequence is Protein TIC 214 (1780 aa).

6 helical membrane passes run I19 to G39, F68 to L88, P91 to N111, V133 to L153, V176 to I196, and I227 to I247. The segment at K251–A275 is disordered. Over residues G254–Q268 the composition is skewed to basic and acidic residues.

The protein belongs to the TIC214 family. As to quaternary structure, part of the Tic complex.

The protein localises to the plastid. It localises to the chloroplast inner membrane. Its function is as follows. Involved in protein precursor import into chloroplasts. May be part of an intermediate translocation complex acting as a protein-conducting channel at the inner envelope. This Draba nemorosa (Woodland whitlowgrass) protein is Protein TIC 214.